The sequence spans 76 residues: MIYKVFYQETKERSPRRENTQALYLDIDAASELEGRIKARKMVEEHTDYNVEFIELLSDKHLDYEKETGVFTLTEF.

It belongs to the RNA polymerase subunit epsilon family. In terms of assembly, RNAP is composed of a core of 2 alpha, a beta and a beta' subunit. The core is associated with a delta subunit, and at least one of epsilon or omega. When a sigma factor is associated with the core the holoenzyme is formed, which can initiate transcription.

It carries out the reaction RNA(n) + a ribonucleoside 5'-triphosphate = RNA(n+1) + diphosphate. A non-essential component of RNA polymerase (RNAP). This Streptococcus equi subsp. equi (strain 4047) protein is DNA-directed RNA polymerase subunit epsilon.